A 521-amino-acid polypeptide reads, in one-letter code: DNA damage-binding protein cmr1 (521 aa).

A disordered region spans residues 36–75 (DKIIPKPAPPKPKRASTPRVKREPVKKEAARPTRQSSRLA). A compositionally biased stretch (basic and acidic residues) spans 55–66 (VKREPVKKEAAR). WD repeat units follow at residues 183-224 (IVPQ…PKIE), 242-282 (THSR…STEI), 333-373 (LTDH…GKGD), 382-422 (EHES…EWKA), and 490-521 (DGIT…CLWM).

Belongs to the WD repeat DDB2/WDR76 family.

Its function is as follows. DNA-binding protein that binds to both single- and double-stranded DNA. Binds preferentially to UV-damaged DNA. May be involved in DNA-metabolic processes. This Neurospora crassa (strain ATCC 24698 / 74-OR23-1A / CBS 708.71 / DSM 1257 / FGSC 987) protein is DNA damage-binding protein cmr1.